We begin with the raw amino-acid sequence, 164 residues long: Crossover junction endodeoxyribonuclease RuvC (164 aa).

Active-site residues include D7, E67, and D139. D7, E67, and D139 together coordinate Mg(2+).

The protein belongs to the RuvC family. As to quaternary structure, homodimer which binds Holliday junction (HJ) DNA. The HJ becomes 2-fold symmetrical on binding to RuvC with unstacked arms; it has a different conformation from HJ DNA in complex with RuvA. In the full resolvosome a probable DNA-RuvA(4)-RuvB(12)-RuvC(2) complex forms which resolves the HJ. Requires Mg(2+) as cofactor.

It localises to the cytoplasm. The catalysed reaction is Endonucleolytic cleavage at a junction such as a reciprocal single-stranded crossover between two homologous DNA duplexes (Holliday junction).. Functionally, the RuvA-RuvB-RuvC complex processes Holliday junction (HJ) DNA during genetic recombination and DNA repair. Endonuclease that resolves HJ intermediates. Cleaves cruciform DNA by making single-stranded nicks across the HJ at symmetrical positions within the homologous arms, yielding a 5'-phosphate and a 3'-hydroxyl group; requires a central core of homology in the junction. The consensus cleavage sequence is 5'-(A/T)TT(C/G)-3'. Cleavage occurs on the 3'-side of the TT dinucleotide at the point of strand exchange. HJ branch migration catalyzed by RuvA-RuvB allows RuvC to scan DNA until it finds its consensus sequence, where it cleaves and resolves the cruciform DNA. The chain is Crossover junction endodeoxyribonuclease RuvC from Geobacter sulfurreducens (strain ATCC 51573 / DSM 12127 / PCA).